Consider the following 111-residue polypeptide: Ribonuclease P protein component (111 aa).

Belongs to the RnpA family. In terms of assembly, consists of a catalytic RNA component (M1 or rnpB) and a protein subunit.

It carries out the reaction Endonucleolytic cleavage of RNA, removing 5'-extranucleotides from tRNA precursor.. Functionally, RNaseP catalyzes the removal of the 5'-leader sequence from pre-tRNA to produce the mature 5'-terminus. It can also cleave other RNA substrates such as 4.5S RNA. The protein component plays an auxiliary but essential role in vivo by binding to the 5'-leader sequence and broadening the substrate specificity of the ribozyme. The sequence is that of Ribonuclease P protein component from Clostridium botulinum (strain 657 / Type Ba4).